A 570-amino-acid chain; its full sequence is Sulfite reductase [NADPH] hemoprotein beta-component (570 aa).

[4Fe-4S] cluster is bound by residues C434, C440, C479, and C483. Residue C483 participates in siroheme binding.

It belongs to the nitrite and sulfite reductase 4Fe-4S domain family. Alpha(8)-beta(8). The alpha component is a flavoprotein, the beta component is a hemoprotein. Siroheme serves as cofactor. It depends on [4Fe-4S] cluster as a cofactor.

It carries out the reaction hydrogen sulfide + 3 NADP(+) + 3 H2O = sulfite + 3 NADPH + 4 H(+). It participates in sulfur metabolism; hydrogen sulfide biosynthesis; hydrogen sulfide from sulfite (NADPH route): step 1/1. In terms of biological role, component of the sulfite reductase complex that catalyzes the 6-electron reduction of sulfite to sulfide. This is one of several activities required for the biosynthesis of L-cysteine from sulfate. The sequence is that of Sulfite reductase [NADPH] hemoprotein beta-component from Escherichia fergusonii (strain ATCC 35469 / DSM 13698 / CCUG 18766 / IAM 14443 / JCM 21226 / LMG 7866 / NBRC 102419 / NCTC 12128 / CDC 0568-73).